Here is a 245-residue protein sequence, read N- to C-terminus: 2,3-bisphosphoglycerate-dependent phosphoglycerate mutase (245 aa).

Residues 8–15 (RHGQSLWN), 21–22 (TG), Arg60, 87–90 (ERHY), Lys98, 114–115 (RR), and 183–184 (GN) each bind substrate. His9 acts as the Tele-phosphohistidine intermediate in catalysis. The active-site Proton donor/acceptor is Glu87.

This sequence belongs to the phosphoglycerate mutase family. BPG-dependent PGAM subfamily.

It carries out the reaction (2R)-2-phosphoglycerate = (2R)-3-phosphoglycerate. The protein operates within carbohydrate degradation; glycolysis; pyruvate from D-glyceraldehyde 3-phosphate: step 3/5. Functionally, catalyzes the interconversion of 2-phosphoglycerate and 3-phosphoglycerate. The polypeptide is 2,3-bisphosphoglycerate-dependent phosphoglycerate mutase (Bacillus cereus (strain B4264)).